Consider the following 103-residue polypeptide: Leukocyte cysteine proteinase inhibitor 1 (103 aa).

Position 1 is a blocked amino end (Met); partial (Met-1). Residues 1-20 (MESEEMLAGGLTEPRPATPE) are disordered. Positions 51–55 (QVVAG) match the Secondary area of contact motif.

Belongs to the cystatin family.

Its subcellular location is the cytoplasm. In terms of biological role, potent inhibitor of cathepsins L and S, and papain. The sequence is that of Leukocyte cysteine proteinase inhibitor 1 from Sus scrofa (Pig).